We begin with the raw amino-acid sequence, 598 residues long: Beta-hexosaminidase A (598 aa).

Positions 1–11 are cleaved as a signal peptide; it reads MSFITSAHATA. Asp305 is a catalytic residue.

This sequence belongs to the glycosyl hydrolase 3 family.

The catalysed reaction is Hydrolysis of terminal non-reducing N-acetyl-D-hexosamine residues in N-acetyl-beta-D-hexosaminides.. Most active towards p-nitrophenyl-N-acetyl-beta-D-glucosaminide(PNP-beta-GlcNAc) and diacetylchitobiose. This Pseudoalteromonas piscicida protein is Beta-hexosaminidase A (cht60).